The sequence spans 103 residues: Large ribosomal subunit protein bL21 (103 aa).

Belongs to the bacterial ribosomal protein bL21 family. Part of the 50S ribosomal subunit. Contacts protein L20.

In terms of biological role, this protein binds to 23S rRNA in the presence of protein L20. The protein is Large ribosomal subunit protein bL21 of Aeromonas hydrophila subsp. hydrophila (strain ATCC 7966 / DSM 30187 / BCRC 13018 / CCUG 14551 / JCM 1027 / KCTC 2358 / NCIMB 9240 / NCTC 8049).